The following is a 641-amino-acid chain: ATP-dependent DNA helicase PIF1 (641 aa).

A PINT region spans residues 1-180 (MLSGIEAAAG…LVKRPVEPQA (180 aa)). Ser-27 and Ser-151 each carry phosphoserine. Positions 167 to 641 (PDTTLVKRPV…SDQENMDPIL (475 aa)) are hydrolyzes ATP in the presence of both magnesium and single-stranded DNA; weak activity in the presence of RNA or double-stranded DNA; No unwinding activity. Residues 173–192 (KRPVEPQAGAEPSTEAPRWP) form a disordered region. 228 to 235 (GSAGTGKS) is an ATP binding site. The DNA-binding element occupies 577-596 (QAYVALSRARSLQGLRVLDF). The disordered stretch occupies residues 622–641 (LESPDDDEAASDQENMDPIL). A compositionally biased stretch (acidic residues) spans 624–641 (SPDDDEAASDQENMDPIL).

The protein belongs to the helicase family. PIF1 subfamily. In terms of assembly, monomer. Interacts with telomerase. Mg(2+) serves as cofactor. In terms of tissue distribution, weak ubiquitous expression.

It is found in the nucleus. It localises to the mitochondrion. It carries out the reaction Couples ATP hydrolysis with the unwinding of duplex DNA at the replication fork by translocating in the 5'-3' direction. This creates two antiparallel DNA single strands (ssDNA). The leading ssDNA polymer is the template for DNA polymerase III holoenzyme which synthesizes a continuous strand.. It catalyses the reaction ATP + H2O = ADP + phosphate + H(+). DNA-dependent ATPase and 5'-3' DNA helicase required for the maintenance of both mitochondrial and nuclear genome stability. Efficiently unwinds G-quadruplex (G4) DNA structures and forked RNA-DNA hybrids. Resolves G4 structures, preventing replication pausing and double-strand breaks (DSBs) at G4 motifs. Involved in the maintenance of telomeric DNA. Inhibits telomere elongation, de novo telomere formation and telomere addition to DSBs via catalytic inhibition of telomerase. Reduces the processivity of telomerase by displacing active telomerase from DNA ends. Releases telomerase by unwinding the short telomerase RNA/telomeric DNA hybrid that is the intermediate in the telomerase reaction. Possesses an intrinsic strand annealing activity. This chain is ATP-dependent DNA helicase PIF1, found in Homo sapiens (Human).